The chain runs to 2322 residues: MQSGPRPPLPAPGLALALTLTMLARLASAASFFGENHLEVPVATALTDIDLQLQFSTSQPEALLLLAAGPADHLLLQLYSGRLQVRLVLGQEELRLQTPAETLLSDSIPHTVVLTVVEGWATLSVDGFLNASSAVPGAPLEVPYGLFVGGTGTLGLPYLRGTSRPLRGCLHAATLNGRSLLRPLTPDVHEGCAEEFSASDDVALGFSGPHSLAAFPAWGTQDEGTLEFTLTTQSRQAPLAFQAGGRRGDFIYVDIFEGHLRAVVEKGQGTVLLHNSVPVADGQPHEVSVHINAHRLEISVDQYPTHTSNRGVLSYLEPRGSLLLGGLDAEASRHLQEHRLGLTPEATNASLLGCMEDLSVNGQRRGLREALLTRNMAAGCRLEEEEYEDDAYGHYEAFSTLAPEAWPAMELPEPCVPEPGLPPVFANFTQLLTISPLVVAEGGTAWLEWRHVQPTLDLMEAELRKSQVLFSVTRGARHGELELDIPGAQARKMFTLLDVVNRKARFIHDGSEDTSDQLVLEVSVTARVPMPSCLRRGQTYLLPIQVNPVNDPPHIIFPHGSLMVILEHTQKPLGPEVFQAYDPDSACEGLTFQVLGTSSGLPVERRDQPGEPATEFSCRELEAGSLVYVHRGGPAQDLTFRVSDGLQASPPATLKVVAIRPAIQIHRSTGLRLAQGSAMPILPANLSVETNAVGQDVSVLFRVTGALQFGELQKQGAGGVEGAEWWATQAFHQRDVEQGRVRYLSTDPQHHAYDTVENLALEVQVGQEILSNLSFPVTIQRATVWMLRLEPLHTQNTQQETLTTAHLEATLEEAGPSPPTFHYEVVQAPRKGNLQLQGTRLSDGQGFTQDDIQAGRVTYGATARASEAVEDTFRFRVTAPPYFSPLYTFPIHIGGDPDAPVLTNVLLVVPEGGEGVLSADHLFVKSLNSASYLYEVMERPRHGRLAWRGTQDKTTMVTSFTNEDLLRGRLVYQHDDSETTEDDIPFVATRQGESSGDMAWEEVRGVFRVAIQPVNDHAPVQTISRIFHVARGGRRLLTTDDVAFSDADSGFADAQLVLTRKDLLFGSIVAVDEPTRPIYRFTQEDLRKRRVLFVHSGADRGWIQLQVSDGQHQATALLEVQASEPYLRVANGSSLVVPQGGQGTIDTAVLHLDTNLDIRSGDEVHYHVTAGPRWGQLVRAGQPATAFSQQDLLDGAVLYSHNGSLSPRDTMAFSVEAGPVHTDATLQVTIALEGPLAPLKLVRHKKIYVFQGEAAEIRRDQLEAAQEAVPPADIVFSVKSPPSAGYLVMVSRGALADEPPSLDPVQSFSQEAVDTGRVLYLHSRPEAWSDAFSLDVASGLGAPLEGVLVELEVLPAAIPLEAQNFSVPEGGSLTLAPPLLRVSGPYFPTLLGLSLQVLEPPQHGALQKEDGPQARTLSAFSWRMVEEQLIRYVHDGSETLTDSFVLMANASEMDRQSHPVAFTVTVLPVNDQPPILTTNTGLQMWEGATAPIPAEALRSTDGDSGSEDLVYTIEQPSNGRVVLRGAPGTEVRSFTQAQLDGGLVLFSHRGTLDGGFRFRLSDGEHTSPGHFFRVTAQKQVLLSLKGSQTLTVCPGSVQPLSSQTLRASSSAGTDPQLLLYRVVRGPQLGRLFHAQQDSTGEALVNFTQAEVYAGNILYEHEMPPEPFWEAHDTLELQLSSPPARDVAATLAVAVSFEAACPQRPSHLWKNKGLWVPEGQRARITVAALDASNLLASVPSPQRSEHDVLFQVTQFPSRGQLLVSEEPLHAGQPHFLQSQLAAGQLVYAHGGGGTQQDGFHFRAHLQGPAGASVAGPQTSEAFAITVRDVNERPPQPQASVPLRLTRGSRAPISRAQLSVVDPDSAPGEIEYEVQRAPHNGFLSLVGGGLGPVTRFTQADVDSGRLAFVANGSSVAGIFQLSMSDGASPPLPMSLAVDILPSAIEVQLRAPLEVPQALGRSSLSQQQLRVVSDREEPEAAYRLIQGPQYGHLLVGGRPTSAFSQFQIDQGEVVFAFTNFSSSHDHFRVLALARGVNASAVVNVTVRALLHVWAGGPWPQGATLRLDPTVLDAGELANRTGSVPRFRLLEGPRHGRVVRVPRARTEPGGSQLVEQFTQQDLEDGRLGLEVGRPEGRAPGPAGDSLTLELWAQGVPPAVASLDFATEPYNAARPYSVALLSVPEAARTEAGKPESSTPTGEPGPMASSPEPAVAKGGFLSFLEANMFSVIIPMCLVLLLLALILPLLFYLRKRNKTGKHDVQVLTAKPRNGLAGDTETFRKVEPGQAIPLTAVPGQGPPPGGQPDPELLQFCRTPNPALKNGQYWV.

The first 29 residues, 1-29 (MQSGPRPPLPAPGLALALTLTMLARLASA), serve as a signal peptide directing secretion. Laminin G-like domains lie at 30 to 192 (ASFF…HEGC) and 202 to 380 (VALG…AAGC). Positions 30-639 (ASFFGENHLE…HRGGPAQDLT (610 aa)) are globular or compact configuration stabilized by disulfide bonds. The tract at residues 30 to 639 (ASFFGENHLE…HRGGPAQDLT (610 aa)) is neurite growth inhibition. Residues 30 to 2224 (ASFFGENHLE…LSFLEANMFS (2195 aa)) are Extracellular-facing. N-linked (GlcNAc...) asparagine glycosylation occurs at Asn-130. Cys-169 and Cys-192 are joined by a disulfide. An N-linked (GlcNAc...) asparagine glycan is attached at Asn-348. Cys-354 and Cys-380 are oxidised to a cystine. Residue Asn-427 is glycosylated (N-linked (GlcNAc...) asparagine). CSPG repeat units follow at residues 428 to 523 (FTQL…LEVS), 553 to 645 (PHII…VSDG), and 662 to 764 (AIQI…LEVQ). The segment at 574–1040 (GPEVFQAYDP…RGGRRLLTTD (467 aa)) is interaction with COL6A2. Residues 631–1446 (RGGPAQDLTF…SETLTDSFVL (816 aa)) are interaction with COL5A1. Asn-685 and Asn-772 each carry an N-linked (GlcNAc...) asparagine glycan. CSPG repeat units lie at residues 783-878 (TVWM…FRVT) and 898-989 (DAPV…FVAT). O-linked (Xyl...) (chondroitin sulfate) serine glycosylation occurs at Ser-995. 9 CSPG repeats span residues 1018–1110 (APVQ…VSDG), 1126–1216 (YLRV…FSVE), 1238–1337 (PLKL…LDVA), 1356–1449 (AAIP…LMAN), 1473–1563 (PPIL…LSDG), 1581–1679 (LLSL…LQLS), 1704–1803 (PSHL…FRAH), 1832–1924 (PPQP…MSDG), and 1941–2029 (AIEV…VLAL). N-linked (GlcNAc...) asparagine glycosylation is found at Asn-1131 and Asn-1202. N-linked (GlcNAc...) asparagine glycosylation is found at Asn-1364 and Asn-1449. Positions 1586-2221 (GSQTLTVCPG…GGFLSFLEAN (636 aa)) are neurite growth inhibition. Positions 1587 to 2221 (SQTLTVCPGS…GGFLSFLEAN (635 aa)) are cysteine-containing. An N-linked (GlcNAc...) asparagine glycan is attached at Asn-1645. Residues Asn-1909, Asn-2016, Asn-2034, Asn-2040, and Asn-2075 are each glycosylated (N-linked (GlcNAc...) asparagine). Residues 2038–2147 (VVNVTVRALL…AGDSLTLELW (110 aa)) form a CSPG 15 repeat. Positions 2182–2206 (ARTEAGKPESSTPTGEPGPMASSPE) are disordered. The chain crosses the membrane as a helical span at residues 2225 to 2245 (VIIPMCLVLLLLALILPLLFY). Topologically, residues 2246 to 2322 (LRKRNKTGKH…PALKNGQYWV (77 aa)) are cytoplasmic. Residue Thr-2252 is modified to Phosphothreonine; by PKC/PRKCA. The short motif at 2320–2322 (YWV) is the PDZ-binding element.

In terms of assembly, interacts with the first PDZ domain of MPDZ. Interacts with PRKCA. Binds TNC, laminin-1, COL5A1 and COL6A2. Interacts with PLG and angiostatin. Binds FGF2 and PDGFA. Interacts with GRIP1, GRIP2 and GRIA2. Forms a ternary complex with GRIP1 and GRIA2. Interacts with LGALS3 and the integrin composed of ITGB1 and ITGA3. Interacts with ITGA4 through its chondroitin sulfate glycosaminoglycan. Interacts with BCAR1, CDC42 and ACK1. Interacts with MMP16. (Microbial infection) Interacts with C.difficile toxin TcdB, suggesting that it may act as a receptor for TcdB. In terms of processing, O-glycosylated; contains glycosaminoglycan chondroitin sulfate which are required for proper localization and function in stress fiber formation. Involved in interaction with MMP16 and ITGA4. Phosphorylation by PRKCA regulates its subcellular location and function in cell motility. In terms of tissue distribution, detected in fibroblasts (at protein level). Detected in placenta (at protein level). Detected in malignant melanoma cells.

The protein resides in the cell membrane. The protein localises to the apical cell membrane. It localises to the cell projection. Its subcellular location is the lamellipodium membrane. It is found in the cell surface. Its function is as follows. Proteoglycan playing a role in cell proliferation and migration which stimulates endothelial cells motility during microvascular morphogenesis. May also inhibit neurite outgrowth and growth cone collapse during axon regeneration. Cell surface receptor for collagen alpha 2(VI) which may confer cells ability to migrate on that substrate. Binds through its extracellular N-terminus growth factors, extracellular matrix proteases modulating their activity. May regulate MPP16-dependent degradation and invasion of type I collagen participating in melanoma cells invasion properties. May modulate the plasminogen system by enhancing plasminogen activation and inhibiting angiostatin. Also functions as a signal transducing protein by binding through its cytoplasmic C-terminus scaffolding and signaling proteins. May promote retraction fiber formation and cell polarization through Rho GTPase activation. May stimulate alpha-4, beta-1 integrin-mediated adhesion and spreading by recruiting and activating a signaling cascade through CDC42, ACK1 and BCAR1. May activate FAK and ERK1/ERK2 signaling cascades. In Homo sapiens (Human), this protein is Chondroitin sulfate proteoglycan 4 (CSPG4).